The chain runs to 368 residues: Histidinol dehydrogenase (368 aa).

Residues Thr197, Gln218, and His221 each coordinate substrate. The Zn(2+) site is built by Gln218 and His221. Residues Glu276 and His277 each act as proton acceptor in the active site. Substrate contacts are provided by His277, Asp306, Glu358, and His363. Asp306 lines the Zn(2+) pocket. Position 363 (His363) interacts with Zn(2+).

It belongs to the histidinol dehydrogenase family. Zn(2+) serves as cofactor.

The enzyme catalyses L-histidinol + 2 NAD(+) + H2O = L-histidine + 2 NADH + 3 H(+). The protein operates within amino-acid biosynthesis; L-histidine biosynthesis; L-histidine from 5-phospho-alpha-D-ribose 1-diphosphate: step 9/9. Its function is as follows. Catalyzes the sequential NAD-dependent oxidations of L-histidinol to L-histidinaldehyde and then to L-histidine. This chain is Histidinol dehydrogenase, found in Pyrobaculum aerophilum (strain ATCC 51768 / DSM 7523 / JCM 9630 / CIP 104966 / NBRC 100827 / IM2).